Here is a 337-residue protein sequence, read N- to C-terminus: LIX1-like protein (337 aa).

The interval 1–55 (METMRAQRLQPGVGVGGRGTLRALRPGVTGAPTSAATPPVGPPPAPPPPAPPLPP) is disordered. A compositionally biased stretch (low complexity) spans 26-38 (PGVTGAPTSAATP). Over residues 39–55 (PVGPPPAPPPPAPPLPP) the composition is skewed to pro residues.

The protein belongs to the LIX1 family.

This Mus musculus (Mouse) protein is LIX1-like protein (Lix1l).